Here is a 762-residue protein sequence, read N- to C-terminus: uncharacterized protein (762 aa).

Residues 1 to 26 are disordered; the sequence is MENLKSASPEEDSPRHGDNMGKPKRI. Positions 12–21 are enriched in basic and acidic residues; sequence DSPRHGDNMG. The segment at residues 30 to 57 is a DNA-binding region (zn(2)-C6 fungal-type); it reads CDMCRKRKIRCDGKQPACSNCVSHGIPC. The interval 647–668 is disordered; it reads QSHVPPRISSNHSDTSVKSNSP.

It localises to the nucleus. This is an uncharacterized protein from Schizosaccharomyces pombe (strain 972 / ATCC 24843) (Fission yeast).